A 223-amino-acid chain; its full sequence is Uracil-DNA glycosylase (223 aa).

The active-site Proton acceptor is the aspartate 67.

It belongs to the uracil-DNA glycosylase (UDG) superfamily. UNG family.

It localises to the cytoplasm. It carries out the reaction Hydrolyzes single-stranded DNA or mismatched double-stranded DNA and polynucleotides, releasing free uracil.. Its function is as follows. Excises uracil residues from the DNA which can arise as a result of misincorporation of dUMP residues by DNA polymerase or due to deamination of cytosine. This Borrelia turicatae (strain 91E135) protein is Uracil-DNA glycosylase.